The chain runs to 212 residues: MDGVHDLAGVQGFGKVPHTVNADIGPTFHAEWEHLPYSLMFAGVAELGAFSVDEVRYVVERMEPRHYMMTPYYERYVIGVATLMVEKGILTQDELESLAGGPFPLSRPSESEGRPAPVETTTFEVGQRVRVRDEYVPGHIRMPAYCRGRVGTISHRTTEKWPFPDAIGHGRNDAGEEPTYHVKFAAEELFGSDTDGGSVVVDLFEGYLEPAA.

It belongs to the nitrile hydratase subunit beta family. In terms of assembly, heterodimer of an alpha and a beta chain.

It carries out the reaction an aliphatic primary amide = an aliphatic nitrile + H2O. In terms of biological role, NHase catalyzes the hydration of various nitrile compounds to the corresponding amides. The chain is Nitrile hydratase subunit beta (nthB) from Rhodococcus erythropolis (Arthrobacter picolinophilus).